A 202-amino-acid polypeptide reads, in one-letter code: MATQPRIGSISRVTSESDIRVEINLDGTGTVEIDTGVPFFDHMLTAFGVHGAFDLKVKATGDTHIDAHHTVEDTAIVLGQAIAQAVGDKRGIKRFGSFQLPMDETLCEAIVDFSGRPYFVTKGEPDYLVHSVIGSHYPTVLNEHFFESLALNAKITLHVLCRYGRDPHHITEAEFKAVARAIREAVGPDDRLTGIPSTKGAL.

Belongs to the imidazoleglycerol-phosphate dehydratase family.

The protein localises to the cytoplasm. The enzyme catalyses D-erythro-1-(imidazol-4-yl)glycerol 3-phosphate = 3-(imidazol-4-yl)-2-oxopropyl phosphate + H2O. It participates in amino-acid biosynthesis; L-histidine biosynthesis; L-histidine from 5-phospho-alpha-D-ribose 1-diphosphate: step 6/9. The protein is Imidazoleglycerol-phosphate dehydratase of Corynebacterium diphtheriae (strain ATCC 700971 / NCTC 13129 / Biotype gravis).